The primary structure comprises 913 residues: Sterol uptake control protein 2 (913 aa).

Positions G50–Y80 form a DNA-binding region, zn(2)-C6 fungal-type. Disordered stretches follow at residues G103 to L173 and G216 to S258. At T122 the chain carries Phosphothreonine. Basic and acidic residues predominate over residues S150–N164. Residues Q222–Q241 show a composition bias toward low complexity. Positions Q303–V346 form a coiled coil. Disordered regions lie at residues L347–S385 and M453–S489. Residues L374 to S385 are compositionally biased toward polar residues. The stretch at A440–S472 forms a coiled coil. Over residues Q454 to D468 the composition is skewed to basic and acidic residues. Residues G469–S487 show a composition bias toward polar residues. Position 519 is a phosphoserine (S519). Polar residues predominate over residues E552–T562. The segment at E552–Q571 is disordered.

It localises to the nucleus. In terms of biological role, transcription factor that is involved in activation of anaerobic genes such as DAN/TIR cell wall mannoprotein genes and YML083c. Appears to bind to anaerobic response elements (AR1) with the consensus sequence 5'-TCGTTYAG-3' present in the promoter regions of DAN/TIR genes. Involved in sterol uptake and regulation of the sterol biosynthesis. Binds to sterol regulatory elements (SRE) with the consensus sequence 5'-TCGTATA-3' present in ERG2 and ERG3 promoters. May be involved in down-regulation of CWP2 during anaerobic adaptation. The chain is Sterol uptake control protein 2 (UPC2) from Saccharomyces cerevisiae (strain ATCC 204508 / S288c) (Baker's yeast).